Here is a 411-residue protein sequence, read N- to C-terminus: Na(+)-translocating NADH-quinone reductase subunit F (411 aa).

The helical transmembrane segment at 5 to 25 (VILALGIAAFTVIVLVLVAII) threads the bilayer. The 95-residue stretch at 36–130 (GDITIDINDD…NMEVELPEEI (95 aa)) folds into the 2Fe-2S ferredoxin-type domain. Residues C73, C79, C82, and C114 each coordinate [2Fe-2S] cluster. The FAD-binding FR-type domain maps to 133 to 273 (VKKWECTVIS…SGPFGEFFAK (141 aa)).

It belongs to the NqrF family. In terms of assembly, composed of six subunits; NqrA, NqrB, NqrC, NqrD, NqrE and NqrF. [2Fe-2S] cluster is required as a cofactor. Requires FAD as cofactor.

It localises to the cell inner membrane. The enzyme catalyses a ubiquinone + n Na(+)(in) + NADH + H(+) = a ubiquinol + n Na(+)(out) + NAD(+). NQR complex catalyzes the reduction of ubiquinone-1 to ubiquinol by two successive reactions, coupled with the transport of Na(+) ions from the cytoplasm to the periplasm. The first step is catalyzed by NqrF, which accepts electrons from NADH and reduces ubiquinone-1 to ubisemiquinone by a one-electron transfer pathway. In Haemophilus influenzae (strain PittGG), this protein is Na(+)-translocating NADH-quinone reductase subunit F.